Here is a 132-residue protein sequence, read N- to C-terminus: Small ribosomal subunit protein uS13 (132 aa).

Positions 101–125 (RGLPVRGQRTKTNARTRKGPRKTVA) are enriched in basic residues. Positions 101-132 (RGLPVRGQRTKTNARTRKGPRKTVANKKIETR) are disordered.

The protein belongs to the universal ribosomal protein uS13 family. In terms of assembly, part of the 30S ribosomal subunit. Forms a loose heterodimer with protein S19. Forms two bridges to the 50S subunit in the 70S ribosome.

Its function is as follows. Located at the top of the head of the 30S subunit, it contacts several helices of the 16S rRNA. In the 70S ribosome it contacts the 23S rRNA (bridge B1a) and protein L5 of the 50S subunit (bridge B1b), connecting the 2 subunits; these bridges are implicated in subunit movement. Contacts the tRNAs in the A and P-sites. This is Small ribosomal subunit protein uS13 from Ureaplasma parvum serovar 3 (strain ATCC 27815 / 27 / NCTC 11736).